The primary structure comprises 205 residues: Hydrogenase-4 component A (205 aa).

4 4Fe-4S ferredoxin-type domains span residues 2–31, 41–72, 73–102, and 140–172; these read NRFVVAEPLWCTGCNTCLAACSDVHKTQGL, KTSTITAPVVCHHCEEAPCLQVCPVNAISQRD, DAIQLNESLCIGCKLCAVVCPFGAISASGS, and QTVAVKCDLCDFLPEGPACVRACPNQALRLITG. Residues C12, C15, C18, C22, C51, C54, C59, C63, C82, C85, C88, C92, C146, C149, C158, and C162 each coordinate [4Fe-4S] cluster.

The cofactor is [4Fe-4S] cluster.

Probable electron transfer protein for hydrogenase 4. This chain is Hydrogenase-4 component A, found in Escherichia coli (strain K12).